We begin with the raw amino-acid sequence, 466 residues long: Cysteine--tRNA ligase (466 aa).

Cys-28 contacts Zn(2+). The short motif at 30–40 is the 'HIGH' region element; it reads PTVYNYIHIGN. The Zn(2+) site is built by Cys-208, His-233, and Glu-237. The 'KMSKS' region signature appears at 265–269; it reads KMSKS. Lys-268 serves as a coordination point for ATP. Position 269 is a phosphoserine (Ser-269).

It belongs to the class-I aminoacyl-tRNA synthetase family. Monomer. Zn(2+) is required as a cofactor.

It is found in the cytoplasm. The enzyme catalyses tRNA(Cys) + L-cysteine + ATP = L-cysteinyl-tRNA(Cys) + AMP + diphosphate. The protein is Cysteine--tRNA ligase of Shouchella clausii (strain KSM-K16) (Alkalihalobacillus clausii).